We begin with the raw amino-acid sequence, 401 residues long: Chalcone synthase 2 (401 aa).

Cys168 is an active-site residue.

The protein belongs to the thiolase-like superfamily. Chalcone/stilbene synthases family.

It carries out the reaction (E)-4-coumaroyl-CoA + 3 malonyl-CoA + 3 H(+) = 2',4,4',6'-tetrahydroxychalcone + 3 CO2 + 4 CoA. It functions in the pathway secondary metabolite biosynthesis; flavonoid biosynthesis. In terms of biological role, the primary product of this enzyme is 4,2',4',6'-tetrahydroxychalcone (also termed naringenin-chalcone or chalcone) which can under specific conditions spontaneously isomerize into naringenin. The chain is Chalcone synthase 2 (CHS2) from Sorghum bicolor (Sorghum).